The following is a 195-amino-acid chain: Lipid A acyltransferase PagP (195 aa).

Residues 1 to 30 (MRLTLTSRSRLFVLSSLLFISTFDVLSAQA) form the signal peptide. Catalysis depends on residues H67, D110, and S111.

The protein belongs to the lipid A palmitoyltransferase family. As to quaternary structure, homodimer.

Its subcellular location is the cell outer membrane. The catalysed reaction is a lipid A + a 1,2-diacyl-sn-glycero-3-phosphocholine = a hepta-acyl lipid A + a 2-acyl-sn-glycero-3-phosphocholine. It catalyses the reaction a lipid IVA + a 1,2-diacyl-sn-glycero-3-phosphocholine = a lipid IVB + a 2-acyl-sn-glycero-3-phosphocholine. It carries out the reaction a lipid IIA + a 1,2-diacyl-sn-glycero-3-phosphocholine = a lipid IIB + a 2-acyl-sn-glycero-3-phosphocholine. Its function is as follows. Transfers a fatty acid residue from the sn-1 position of a phospholipid to the N-linked hydroxyfatty acid chain on the proximal unit of lipid A or its precursors. This Dickeya chrysanthemi (strain Ech1591) (Dickeya zeae (strain Ech1591)) protein is Lipid A acyltransferase PagP.